A 252-amino-acid polypeptide reads, in one-letter code: Probable aquaporin TIP1-2 (252 aa).

The next 2 helical transmembrane spans lie at 24-44 (VAEF…GMAF) and 57-77 (GLIA…AVGA). Residues 85–87 (NPA) carry the NPA 1 motif. Transmembrane regions (helical) follow at residues 115 to 137 (VVAC…SLSA), 144 to 164 (AVVF…ATAV), and 173 to 193 (VIAP…GGAF). An NPA 2 motif is present at residues 199–201 (NPA). Residues 220–240 (WLGPFVGAAIAALIYDIIFIG) traverse the membrane as a helical segment.

It belongs to the MIP/aquaporin (TC 1.A.8) family. TIP (TC 1.A.8.10) subfamily. Expressed in leaves.

It localises to the vacuole membrane. In terms of biological role, aquaporins facilitate the transport of water and small neutral solutes across cell membranes. May be involved in transport from the vacuolar compartment to the cytoplasm. The sequence is that of Probable aquaporin TIP1-2 (TIP1-2) from Oryza sativa subsp. japonica (Rice).